A 108-amino-acid chain; its full sequence is Tetrahydromethanopterin S-methyltransferase subunit B (108 aa).

A helical transmembrane segment spans residues 79–99 (GMFFGFWVTMAILVLVTILAV).

This sequence belongs to the MtrB family. In terms of assembly, the complex is composed of 8 subunits; MtrA, MtrB, MtrC, MtrD, MtrE, MtrF, MtrG and MtrH.

It localises to the cell membrane. It catalyses the reaction 5-methyl-5,6,7,8-tetrahydromethanopterin + coenzyme M + 2 Na(+)(in) = 5,6,7,8-tetrahydromethanopterin + methyl-coenzyme M + 2 Na(+)(out). It participates in one-carbon metabolism; methanogenesis from CO(2); methyl-coenzyme M from 5,10-methylene-5,6,7,8-tetrahydromethanopterin: step 2/2. Its function is as follows. Part of a complex that catalyzes the formation of methyl-coenzyme M and tetrahydromethanopterin from coenzyme M and methyl-tetrahydromethanopterin. This is an energy-conserving, sodium-ion translocating step. The protein is Tetrahydromethanopterin S-methyltransferase subunit B of Methanococcus maripaludis (strain C7 / ATCC BAA-1331).